Consider the following 231-residue polypeptide: MKAMILAAGRGERMRPLTDTTPKPLLDVAGKPLIGWHLCRLKQAGFTEIVINHAWLGRQIEDALGDGSAYGVNIAYSPEPAGGLETAGGIAQALPLLGGQPFLVVNGDVLTDIDFTAAFQTASSLPEHISAHLWLVENPPHNPDGDFSLLPDSSVRPEVNGGNGLTFSGVGIYRPEMFDGIEAGSVAKLAPVLRGEMRQNRVSGQKHTGLWLDVGTVCRLKEAQALAGAWK.

UTP-binding positions include 11–13 (GER) and lysine 23. Asparagine 106 is a substrate binding site. Residue aspartate 108 coordinates Mg(2+). Substrate contacts are provided by aspartate 146 and aspartate 213. Residue aspartate 213 participates in Mg(2+) binding.

This sequence belongs to the nucleotidyltransferase MurU family. In terms of assembly, monomer. It depends on Mg(2+) as a cofactor.

The enzyme catalyses N-acetyl-alpha-D-muramate 1-phosphate + UDP + H(+) = UDP-N-acetyl-alpha-D-muramate + phosphate. It participates in cell wall biogenesis; peptidoglycan recycling. Functionally, catalyzes the formation of UDP-N-acetylmuramate (UDP-MurNAc), a crucial precursor of the bacterial peptidoglycan cell wall, from UTP and MurNAc-alpha-1P. Is likely involved in peptidoglycan recycling as part of a cell wall recycling pathway that bypasses de novo biosynthesis of the peptidoglycan precursor UDP-MurNAc. Is able to complement the fosfomycin sensitivity phenotype of a P.putida mutant lacking murU. The polypeptide is N-acetylmuramate alpha-1-phosphate uridylyltransferase (Neisseria meningitidis serogroup B (strain ATCC BAA-335 / MC58)).